Reading from the N-terminus, the 211-residue chain is Thymidylate kinase (211 aa).

11–18 (GPDGAGKT) provides a ligand contact to ATP.

Belongs to the thymidylate kinase family.

The catalysed reaction is dTMP + ATP = dTDP + ADP. Functionally, phosphorylation of dTMP to form dTDP in both de novo and salvage pathways of dTTP synthesis. The polypeptide is Thymidylate kinase (Streptococcus equi subsp. equi (strain 4047)).